The primary structure comprises 408 residues: Dual-specificity RNA methyltransferase RlmN (408 aa).

Glu126 (proton acceptor) is an active-site residue. Residues 132–373 (EEGRGTLCLS…NQAGYASPIR (242 aa)) enclose the Radical SAM core domain. Cys139 and Cys384 are oxidised to a cystine. [4Fe-4S] cluster-binding residues include Cys146, Cys150, and Cys153. S-adenosyl-L-methionine is bound by residues 210-211 (GE), Ser242, 264-266 (SLH), and Asn341. The active-site S-methylcysteine intermediate is Cys384.

This sequence belongs to the radical SAM superfamily. RlmN family. The cofactor is [4Fe-4S] cluster.

It is found in the cytoplasm. It catalyses the reaction adenosine(2503) in 23S rRNA + 2 reduced [2Fe-2S]-[ferredoxin] + 2 S-adenosyl-L-methionine = 2-methyladenosine(2503) in 23S rRNA + 5'-deoxyadenosine + L-methionine + 2 oxidized [2Fe-2S]-[ferredoxin] + S-adenosyl-L-homocysteine. The catalysed reaction is adenosine(37) in tRNA + 2 reduced [2Fe-2S]-[ferredoxin] + 2 S-adenosyl-L-methionine = 2-methyladenosine(37) in tRNA + 5'-deoxyadenosine + L-methionine + 2 oxidized [2Fe-2S]-[ferredoxin] + S-adenosyl-L-homocysteine. Functionally, specifically methylates position 2 of adenine 2503 in 23S rRNA and position 2 of adenine 37 in tRNAs. m2A2503 modification seems to play a crucial role in the proofreading step occurring at the peptidyl transferase center and thus would serve to optimize ribosomal fidelity. The polypeptide is Dual-specificity RNA methyltransferase RlmN (Bartonella henselae (strain ATCC 49882 / DSM 28221 / CCUG 30454 / Houston 1) (Rochalimaea henselae)).